Reading from the N-terminus, the 347-residue chain is S-adenosylmethionine:tRNA ribosyltransferase-isomerase (347 aa).

This sequence belongs to the QueA family. Monomer.

The protein localises to the cytoplasm. The enzyme catalyses 7-aminomethyl-7-carbaguanosine(34) in tRNA + S-adenosyl-L-methionine = epoxyqueuosine(34) in tRNA + adenine + L-methionine + 2 H(+). Its pathway is tRNA modification; tRNA-queuosine biosynthesis. Transfers and isomerizes the ribose moiety from AdoMet to the 7-aminomethyl group of 7-deazaguanine (preQ1-tRNA) to give epoxyqueuosine (oQ-tRNA). This Bordetella bronchiseptica (strain ATCC BAA-588 / NCTC 13252 / RB50) (Alcaligenes bronchisepticus) protein is S-adenosylmethionine:tRNA ribosyltransferase-isomerase.